The chain runs to 207 residues: Large ribosomal subunit protein uL3 (207 aa).

It belongs to the universal ribosomal protein uL3 family. Part of the 50S ribosomal subunit. Forms a cluster with proteins L14 and L19.

One of the primary rRNA binding proteins, it binds directly near the 3'-end of the 23S rRNA, where it nucleates assembly of the 50S subunit. In Fervidobacterium nodosum (strain ATCC 35602 / DSM 5306 / Rt17-B1), this protein is Large ribosomal subunit protein uL3.